We begin with the raw amino-acid sequence, 388 residues long: Ribonuclease D (388 aa).

The 167-residue stretch at 7–173 folds into the 3'-5' exonuclease domain; that stretch reads ITDSKTLAQF…QIFPKMLEEL (167 aa). In terms of domain architecture, HRDC spans 212–293; sequence KADVLGRLKA…ASHAPLAKEE (82 aa).

Belongs to the RNase D family. The cofactor is a divalent metal cation.

The protein localises to the cytoplasm. The catalysed reaction is Exonucleolytic cleavage that removes extra residues from the 3'-terminus of tRNA to produce 5'-mononucleotides.. Its function is as follows. Exonuclease involved in the 3' processing of various precursor tRNAs. Initiates hydrolysis at the 3'-terminus of an RNA molecule and releases 5'-mononucleotides. This is Ribonuclease D from Sphingobium indicum (strain DSM 16413 / CCM 7287 / MTCC 6362 / UT26 / NBRC 101211 / UT26S) (Sphingobium japonicum).